Consider the following 216-residue polypeptide: 3-isopropylmalate dehydratase small subunit (216 aa).

This sequence belongs to the LeuD family. LeuD type 1 subfamily. As to quaternary structure, heterodimer of LeuC and LeuD.

The enzyme catalyses (2R,3S)-3-isopropylmalate = (2S)-2-isopropylmalate. The protein operates within amino-acid biosynthesis; L-leucine biosynthesis; L-leucine from 3-methyl-2-oxobutanoate: step 2/4. Functionally, catalyzes the isomerization between 2-isopropylmalate and 3-isopropylmalate, via the formation of 2-isopropylmaleate. This is 3-isopropylmalate dehydratase small subunit from Bordetella avium (strain 197N).